The sequence spans 157 residues: Eukaryotic translation initiation factor 5A-2 (157 aa).

Position 2 is an N-acetylserine (Ser2). A Phosphoserine modification is found at Ser2. Position 7 is a phosphothreonine (Thr7). Lys51 is subject to Hypusine. Position 74 is a phosphoserine (Ser74). A Glycyl lysine isopeptide (Lys-Gly) (interchain with G-Cter in ubiquitin) cross-link involves residue Lys86.

It belongs to the eIF-5A family. Homodimer. Binds to 80S ribosomes. Actively translating ribosomes show mutually exclusive binding of eIF5a (HYP2 or ANB1) and EFT1/eEF2. Interacts with DYS1 and LIA1. Lys-51 undergoes hypusination, a unique post-translational modification that consists in the addition of a butylamino group from spermidine to lysine side chain, leading to the formation of the unusual amino acid hypusine. eIF-5As are the only known proteins to undergo this modification, which is essential for their function.

The protein resides in the cytoplasm. Its function is as follows. Translation factor that promotes translation elongation and termination, particularly upon ribosome stalling at specific amino acid sequence contexts. Binds between the exit (E) and peptidyl (P) site of the ribosome and promotes rescue of stalled ribosome: specifically required for efficient translation of polyproline-containing peptides as well as other motifs that stall the ribosome. Acts as ribosome quality control (RQC) cofactor by joining the RQC complex to facilitate peptidyl transfer during CAT tailing step. Involved in actin dynamics and cell cycle progression, mRNA decay and probably in a pathway involved in stress response and maintenance of cell wall integrity. This chain is Eukaryotic translation initiation factor 5A-2 (ANB1), found in Saccharomyces cerevisiae (strain ATCC 204508 / S288c) (Baker's yeast).